We begin with the raw amino-acid sequence, 187 residues long: uncharacterized protein (187 aa).

A helical membrane pass occupies residues 3 to 23 (AIIIFLILFIVGVLIGVGVYY).

It is found in the membrane. This is an uncharacterized protein from Methanocaldococcus jannaschii (strain ATCC 43067 / DSM 2661 / JAL-1 / JCM 10045 / NBRC 100440) (Methanococcus jannaschii).